A 197-amino-acid polypeptide reads, in one-letter code: Recombination protein RecR (197 aa).

The segment at 55–70 adopts a C4-type zinc-finger fold; sequence CVQCRDFTESEICTIC. The Toprim domain maps to 78–173; that stretch reads QQLCVVESPA…RPSRLAQGMP (96 aa).

It belongs to the RecR family.

In terms of biological role, may play a role in DNA repair. It seems to be involved in an RecBC-independent recombinational process of DNA repair. It may act with RecF and RecO. The protein is Recombination protein RecR of Xanthomonas axonopodis pv. citri (strain 306).